We begin with the raw amino-acid sequence, 660 residues long: Zinc transporter ZIP4 (660 aa).

The signal sequence occupies residues 1 to 22; the sequence is MLPKSVTQGLVLALLVGTVAVA. At 23 to 337 the chain is on the extracellular side; sequence RPRNLLSLLA…QDQLSQTERY (315 aa). 3 disulfide bridges follow: Cys56/Cys61, Cys64/Cys110, and Cys160/Cys195. 2 N-linked (GlcNAc...) asparagine glycosylation sites follow: Asn192 and Asn219. A disordered region spans residues 233-273; that stretch reads GVGGEDHSDHDDHGDHADHSHPDRKASHQDSELHTPHNSNS. Over residues 236–267 the composition is skewed to basic and acidic residues; sequence GEDHSDHDDHGDHADHSHPDRKASHQDSELHT. Asn272 carries N-linked (GlcNAc...) asparagine glycosylation. A disulfide bond links Cys280 and Cys319. The helical transmembrane segment at 338–358 threads the bilayer; the sequence is LYGSLATLLICLCAVFGLLLL. Residues 359–376 lie on the Cytoplasmic side of the membrane; sequence TCAKCSTATHYIMQTFLS. A helical membrane pass occupies residues 377–397; sequence LAVGALTGDALLHLIPKVLGL. Topologically, residues 398 to 420 are extracellular; sequence HTHGGEGHTHEEEVGVGGQATWR. The helical transmembrane segment at 421 to 441 threads the bilayer; that stretch reads LLAVLGGFYIFFLFESFFNLL. Residues 442-511 are Cytoplasmic-facing; the sequence is LPRDQDSEKD…LRAELRLLPY (70 aa). The Essential for SLC39A4 endocytosis signature appears at 465-467; sequence LQL. A helical transmembrane segment spans residues 512 to 531; sequence LITLGDAVHNFADGLAVGAA. Zn(2+)-binding residues include His520, Asn521, and Asp524. Topologically, residues 532 to 539 are extracellular; sequence FSSSWKTG. A helical membrane pass occupies residues 540-566; that stretch reads LATSLAVFCHELPHELGDFAALLHAGL. The Zn(2+) site is built by His549, Glu550, and His553. Residues 567-571 lie on the Cytoplasmic side of the membrane; sequence SVKRA. The helical transmembrane segment at 572–592 threads the bilayer; the sequence is LLLNLASALTAFAGLYVALAV. The Extracellular portion of the chain corresponds to 593–599; that stretch reads GVGEEGE. Residues 600-620 traverse the membrane as a helical segment; the sequence is AWILAVATGLFLYVALCDMLP. Topologically, residues 621–630 are cytoplasmic; that stretch reads AMMNVRDQRP. The chain crosses the membrane as a helical span at residues 631–651; the sequence is WLLFLLHNVGLLGGWTVLLLL. Over 652 to 660 the chain is Extracellular; sequence SLYEDNITF. N-linked (GlcNAc...) asparagine glycosylation is present at Asn657.

This sequence belongs to the ZIP transporter (TC 2.A.5) family. In terms of assembly, homodimer. Homodimerization is mediated by the transmembrane domain. In terms of processing, the extracellular N-terminal ectodomain is cleaved when cells are Zn(2+) deficient, N-terminally cleaved SLC39A4 is then internalized faster. Under excess Zn(2+) conditions, SLC39A4 on the cell surface is rapidly endocytosed, ubiquitinated, and degraded. Post-translationally, N-glycosylated. Highly expressed in the small intestine and embryonic visceral yolk sac. Weakly expressed in the stomach and liver.

The protein resides in the cell membrane. Its subcellular location is the recycling endosome membrane. The protein localises to the apical cell membrane. The enzyme catalyses Zn(2+)(in) = Zn(2+)(out). Selective transporter that mediates the uptake of Zn(2+). Plays an essential role for dietary zinc uptake from small intestine. The Zn(2+) uniporter activity is regulated by zinc availability. Also exhibits polyspecific binding and transport of Cu(2+), Cd(2+) and possibly Ni(2+) but at higher concentrations. This chain is Zinc transporter ZIP4 (Slc39a4), found in Mus musculus (Mouse).